A 329-amino-acid chain; its full sequence is Glutamyl-Q tRNA(Asp) synthetase (329 aa).

Residues 8–12 and Glu-44 contribute to the L-glutamate site; that span reads RLAPS. Positions 11-21 match the 'HIGH' region motif; sequence PSPTGAQHLGN. Residues Cys-100, Cys-102, Tyr-129, and Cys-133 each contribute to the Zn(2+) site. 2 residues coordinate L-glutamate: Tyr-196 and Arg-214. The short motif at 252–256 is the 'KMSKS' region element; sequence RLAKR. Lys-255 contributes to the ATP binding site.

This sequence belongs to the class-I aminoacyl-tRNA synthetase family. GluQ subfamily. The cofactor is Zn(2+).

Catalyzes the tRNA-independent activation of glutamate in presence of ATP and the subsequent transfer of glutamate onto a tRNA(Asp). Glutamate is transferred on the 2-amino-5-(4,5-dihydroxy-2-cyclopenten-1-yl) moiety of the queuosine in the wobble position of the QUC anticodon. This Rhodopirellula baltica (strain DSM 10527 / NCIMB 13988 / SH1) protein is Glutamyl-Q tRNA(Asp) synthetase.